A 564-amino-acid polypeptide reads, in one-letter code: Pumilio homolog 9 (564 aa).

Residues 222–564 form the PUM-HD domain; the sequence is LEDTVLIGQG…KIFSKTILKK (343 aa). Pumilio repeat units lie at residues 249–284, 285–320, 321–359, 361–396, 397–432, 433–469, 470–501, and 502–539; these read EIYG…VILL, AIID…LIVS, VLTS…ALVK, GLKP…FVLE, AATK…RLVA, EISR…VQFR, MHYA…EIVR, and ELLC…KLVA.

Its subcellular location is the cytoplasm. Functionally, sequence-specific RNA-binding protein that regulates translation and mRNA stability by binding the 3'-UTR of target mRNAs. This Arabidopsis thaliana (Mouse-ear cress) protein is Pumilio homolog 9 (APUM9).